We begin with the raw amino-acid sequence, 173 residues long: CKLF-like MARVEL transmembrane domain-containing protein 8 (173 aa).

The region spanning 36-168 (FLRTLPGLLI…NTYFSFIAWR (133 aa)) is the MARVEL domain. A run of 4 helical transmembrane segments spans residues 40-60 (LPGLLIVAEIVLGLLVWTLIA), 70-90 (FGWVMFVAVFYWVLTVFFLII), 105-125 (TTVGLWFNGSAFALYLSAAIV), and 147-167 (FFAFLVTICYAGNTYFSFIAW).

This sequence belongs to the chemokine-like factor family.

Its subcellular location is the membrane. The chain is CKLF-like MARVEL transmembrane domain-containing protein 8 (CMTM8) from Bos taurus (Bovine).